Here is a 588-residue protein sequence, read N- to C-terminus: NADP-dependent malic enzyme 3 (588 aa).

Position 2 is an N-acetylglycine (Gly-2). The active-site Proton donor is the Tyr-136. Arg-189 lines the NADP(+) pocket. Lys-207 serves as the catalytic Proton acceptor. Glu-279, Asp-280, and Asp-303 together coordinate a divalent metal cation. Residues Asp-303, Leu-332–Ala-348, and Asn-444 contribute to the NADP(+) site.

The protein belongs to the malic enzymes family. Homohexamers and homooctamers. Mg(2+) is required as a cofactor. The cofactor is Mn(2+). As to expression, mostly expressed in flowers, and, to a lower extent, in stems. In leaves and stems, restricted to the trichomes and trichome basal cells. Also present in the stipules flanking the base of the inflorescence bract leaves and in the meristematic zone of developing lateral roots. In flowers, present in pollen and the abscission zone of developing siliques.

Its subcellular location is the cytoplasm. It carries out the reaction (S)-malate + NADP(+) = pyruvate + CO2 + NADPH. It catalyses the reaction oxaloacetate + H(+) = pyruvate + CO2. Slightly activated by succinate and aspartate. Repressed by fumarate, malate, oxaloacetate and glucose. In Arabidopsis thaliana (Mouse-ear cress), this protein is NADP-dependent malic enzyme 3 (NADP-ME3).